A 286-amino-acid chain; its full sequence is Probable endonuclease 4 (286 aa).

Residues H72, H112, E147, D181, H184, H215, D228, H230, and E260 each contribute to the Zn(2+) site.

This sequence belongs to the AP endonuclease 2 family. Requires Zn(2+) as cofactor.

It carries out the reaction Endonucleolytic cleavage to 5'-phosphooligonucleotide end-products.. In terms of biological role, endonuclease IV plays a role in DNA repair. It cleaves phosphodiester bonds at apurinic or apyrimidinic (AP) sites, generating a 3'-hydroxyl group and a 5'-terminal sugar phosphate. The protein is Probable endonuclease 4 of Mycoplasma pneumoniae (strain ATCC 29342 / M129 / Subtype 1) (Mycoplasmoides pneumoniae).